We begin with the raw amino-acid sequence, 78 residues long: Large ribosomal subunit protein bL28 (78 aa).

The disordered stretch occupies residues 1–22; that stretch reads MAKVCQVTGKRPVTGHNVSHAK.

It belongs to the bacterial ribosomal protein bL28 family.

In Saccharophagus degradans (strain 2-40 / ATCC 43961 / DSM 17024), this protein is Large ribosomal subunit protein bL28.